We begin with the raw amino-acid sequence, 1047 residues long: Atrial natriuretic peptide receptor 2 (1047 aa).

An N-terminal signal peptide occupies residues 1-16 (MALPSLLLVVAALAGG). Residues 17 to 458 (VRPPGARNLT…DKTPLSTLAI (442 aa)) lie on the Extracellular side of the membrane. N-linked (GlcNAc...) asparagine glycosylation is found at asparagine 24 and asparagine 35. An intrachain disulfide couples cysteine 75 to cysteine 101. N-linked (GlcNAc...) asparagine glycosylation is found at asparagine 161, asparagine 195, asparagine 244, asparagine 277, and asparagine 349. Residues 459–478 (VALGTGITFIMFGVSSFLIF) traverse the membrane as a helical segment. Over 479–1047 (RKLMLEKELA…GERKGPPGLL (569 aa)) the chain is Cytoplasmic. Serine 513 is modified (phosphoserine). A Protein kinase domain is found at 513 to 786 (SRLTLSLRGS…PDFGQIKGFI (274 aa)). Residue threonine 516 is modified to Phosphothreonine. 4 positions are modified to phosphoserine: serine 518, serine 522, serine 523, and serine 526. Threonine 529 is modified (phosphothreonine). A Guanylate cyclase domain is found at 861–991 (TIYFSDIVGF…DTVNTASRME (131 aa)).

The protein belongs to the adenylyl cyclase class-4/guanylyl cyclase family. Phosphorylated. Phosphorylation of the protein kinase-like domain is required for full activation by CNP. In terms of processing, glycosylated.

Its subcellular location is the cell membrane. It catalyses the reaction GTP = 3',5'-cyclic GMP + diphosphate. In terms of biological role, receptor for the C-type natriuretic peptide NPPC/CNP hormone. Has guanylate cyclase activity upon binding of its ligand. May play a role in the regulation of skeletal growth. The chain is Atrial natriuretic peptide receptor 2 (Npr2) from Rattus norvegicus (Rat).